The primary structure comprises 169 residues: Large ribosomal subunit protein uL5 (169 aa).

Belongs to the universal ribosomal protein uL5 family. In terms of assembly, part of the 50S ribosomal subunit; contacts the 5S rRNA and probably tRNA. Forms a bridge to the 30S subunit in the 70S ribosome.

This is one of the proteins that bind and probably mediate the attachment of the 5S RNA into the large ribosomal subunit, where it forms part of the central protuberance. In the 70S ribosome it contacts protein S13 of the 30S subunit (bridge B1b), connecting the 2 subunits; this bridge is implicated in subunit movement. May contact the P site tRNA; the 5S rRNA and some of its associated proteins might help stabilize positioning of ribosome-bound tRNAs. The sequence is that of Large ribosomal subunit protein uL5 from Methanosarcina barkeri (strain Fusaro / DSM 804).